The primary structure comprises 456 residues: Argininosuccinate lyase (456 aa).

Belongs to the lyase 1 family. Argininosuccinate lyase subfamily.

Its subcellular location is the cytoplasm. It carries out the reaction 2-(N(omega)-L-arginino)succinate = fumarate + L-arginine. It functions in the pathway amino-acid biosynthesis; L-arginine biosynthesis; L-arginine from L-ornithine and carbamoyl phosphate: step 3/3. The polypeptide is Argininosuccinate lyase (Listeria monocytogenes serotype 4b (strain F2365)).